Here is a 200-residue protein sequence, read N- to C-terminus: Recombination protein RecR (200 aa).

Residues 59–74 (CEICGNIDTRSPCTVC) form a C4-type zinc finger. One can recognise a Toprim domain in the interval 82–177 (SIIVVVADVA…KVTRLAHGVP (96 aa)).

Belongs to the RecR family.

Its function is as follows. May play a role in DNA repair. It seems to be involved in an RecBC-independent recombinational process of DNA repair. It may act with RecF and RecO. This is Recombination protein RecR from Nitrobacter hamburgensis (strain DSM 10229 / NCIMB 13809 / X14).